Consider the following 320-residue polypeptide: Acetyl-coenzyme A carboxylase carboxyl transferase subunit alpha (320 aa).

The 262-residue stretch at 33 to 294 (AFDGEIESLR…GDAVEEELKA (262 aa)) folds into the CoA carboxyltransferase C-terminal domain.

Belongs to the AccA family. In terms of assembly, acetyl-CoA carboxylase is a heterohexamer composed of biotin carboxyl carrier protein (AccB), biotin carboxylase (AccC) and two subunits each of ACCase subunit alpha (AccA) and ACCase subunit beta (AccD).

Its subcellular location is the cytoplasm. It catalyses the reaction N(6)-carboxybiotinyl-L-lysyl-[protein] + acetyl-CoA = N(6)-biotinyl-L-lysyl-[protein] + malonyl-CoA. Its pathway is lipid metabolism; malonyl-CoA biosynthesis; malonyl-CoA from acetyl-CoA: step 1/1. Its function is as follows. Component of the acetyl coenzyme A carboxylase (ACC) complex. First, biotin carboxylase catalyzes the carboxylation of biotin on its carrier protein (BCCP) and then the CO(2) group is transferred by the carboxyltransferase to acetyl-CoA to form malonyl-CoA. The sequence is that of Acetyl-coenzyme A carboxylase carboxyl transferase subunit alpha from Phenylobacterium zucineum (strain HLK1).